Consider the following 39-residue polypeptide: Phosphate starvation-inducible protein 1 (39 aa).

The protein localises to the cell outer membrane. In Pseudomonas fluorescens, this protein is Phosphate starvation-inducible protein 1.